We begin with the raw amino-acid sequence, 500 residues long: MTTDQHQEILRTEGLSKFFPGVKALDNVDFSLRRGEIMALLGENGAGKSTLIKALTGVYHADRGTIWLEGQAISPKNTAHAQQLGIGTVYQEVNLLPNMSVADNLFIGREPKRFGLLRRKEMEKRATELMASYGFSLDVREPLNRFSVAMQQIVAICRAIDLSAKVLILDEPTASLDTQEVELLFDLMRQLRDRGVSLIFVTHFLDQVYQVSDRITVLRNGSFVGCRETCELPQIELVKMMLGRELDTHALQRAGRTLLSDKPVAAFKNYGKKGTIAPFDLEVRPGEIVGLAGLLGSGRTETAEVIFGIKPADSGTALIKGKPQNLRSPHQASVLGIGFCPEDRKTDGIIAAASVRENIILALQARRGWLRPISRKEQQEIAERFIRQLGIRTPSTEQPIEFLSGGNQQKVLLSRWLLTRPQFLILDEPTRGIDVGAHAEIIRLIETLCADGLALLVISSELEELVGYADRVIIMRDRKQVAEIPLAELSVPAIMNAIAA.

ABC transporter domains are found at residues 10–245 and 259–497; these read LRTE…LGRE and LSDK…IMNA. Position 42-49 (42-49) interacts with ATP; the sequence is GENGAGKS.

Belongs to the ABC transporter superfamily. In terms of assembly, the complex is composed of two ATP-binding proteins (YtfR), two transmembrane proteins (YtfT and YjfF) and a solute-binding protein (YtfQ).

It localises to the cell inner membrane. It carries out the reaction D-galactofuranose(out) + ATP + H2O = D-galactofuranose(in) + ADP + phosphate + H(+). In terms of biological role, part of the ABC transporter complex YtfQRT-YjfF involved in galactofuranose transport. Responsible for energy coupling to the transport system. The chain is Galactofuranose transporter ATP-binding protein YtfR (ytfR) from Escherichia coli O157:H7.